The following is a 528-amino-acid chain: Tyrosine--tRNA ligase, cytoplasmic (528 aa).

Tyr-39 contacts L-tyrosine. The 'HIGH' region motif lies at 44–52 (TTGKPHVAY). 4 residues coordinate L-tyrosine: Tyr-166, Gln-170, Asp-173, and Gln-188. A 'KMSKS' region motif is present at residues 222–226 (KMSSS). Residues 242 to 247 (KKKLKK) carry the Nuclear localization signal motif. The tract at residues 335–364 (KLSNDAYPGASKQKTVPKGSTKNSGPEEID) is disordered. Over residues 346-358 (KQKTVPKGSTKNS) the composition is skewed to polar residues. The region spanning 364–468 (DPSLLDLRVG…TGSAPGERIY (105 aa)) is the tRNA-binding domain.

It belongs to the class-I aminoacyl-tRNA synthetase family. In terms of assembly, homodimer.

It is found in the cytoplasm. Its subcellular location is the nucleus. The catalysed reaction is tRNA(Tyr) + L-tyrosine + ATP = L-tyrosyl-tRNA(Tyr) + AMP + diphosphate + H(+). Functionally, catalyzes the attachment of tyrosine to tRNA(Tyr) in a two-step reaction: tyrosine is first activated by ATP to form Tyr-AMP and then transferred to the acceptor end of tRNA(Tyr). The protein is Tyrosine--tRNA ligase, cytoplasmic (yars1) of Xenopus tropicalis (Western clawed frog).